A 451-amino-acid polypeptide reads, in one-letter code: MLKYFGTDGVRGVANAGLTPEMAFKLGRDGGYVLTKDKKDGERAKVLVSRDTRISGQMLEYALISGLLSVGIEVLEVGVITTPGLSYLVRAQGADAGVQISASHNPVEDNGIKFFGSDGLKLSDAKEEEIEKLIDAPEDKLPRPSAEGLGTVTNYHEGASKYLQFIENTLPEELGGIKVVVDGANGAASALISRLFADMGVDFTTIATHPNGLNINDHVGATHTKKLQEEVVKQGAQLGLAFDGDADRCIAVDENGNEVDGDHIMYVIGSYLADHGRLKKDTIVTTVMSNLGFTKALERRGLKNVRTQVGDRYVSEEMRANGYNLGGEQSGHVIISDYHNTGDGMLTGLHLLYVMKDTGKSLSELLSDFKEYPQRLINVPVKDKKDWKEHKRITEAIKKVEEELSDEGRIFVRPSGTQSLLRVMTEAPTQELADKYCEEVAKVVEEEMGSK.

Catalysis depends on Ser103, which acts as the Phosphoserine intermediate. Residues Ser103, Asp243, Asp245, and Asp247 each contribute to the Mg(2+) site. Phosphoserine is present on Ser103.

Belongs to the phosphohexose mutase family. Requires Mg(2+) as cofactor. Post-translationally, activated by phosphorylation.

The enzyme catalyses alpha-D-glucosamine 1-phosphate = D-glucosamine 6-phosphate. Its function is as follows. Catalyzes the conversion of glucosamine-6-phosphate to glucosamine-1-phosphate. This Lactobacillus gasseri (strain ATCC 33323 / DSM 20243 / BCRC 14619 / CIP 102991 / JCM 1131 / KCTC 3163 / NCIMB 11718 / NCTC 13722 / AM63) protein is Phosphoglucosamine mutase.